The primary structure comprises 549 residues: MFS-type transporter TwmF (549 aa).

4 helical membrane-spanning segments follow: residues 29 to 49 (IVIGLGITNLLAALENTVLTI), 63 to 83 (NFIWVTNAFFLSSTAILPLFG), 99 to 119 (VAIFVLGSGLCGGASTGAMLI), and 126 to 146 (GVGSGGIIMLSSIIISDLVPL). N-linked (GlcNAc...) asparagine glycosylation is present at Asn151. Helical transmembrane passes span 155–175 (ILMSILGIGSALGPLIGGAIV), 182–202 (WVFYLNLPIGGVSFVFLFIFL), 221–241 (LVGNAIVIASTVAILYALSYA), 249–269 (SWHTLVPLLVGFLGLFIFAGL), 291–311 (IILAINTFVSAALLYWCLFFL), 328–348 (VALLPISLLGIPGSMVGAIAL), 355–375 (KPVHIFAFALQTLGLGLFTLF), 390–410 (IVAFGGGMIFTTMLPAFQAFI), 421–441 (AWYFIRLFGHIWGVAIPAAIF), and 502–522 (VSIAFAGVAFLLTLLEKDVGL).

It belongs to the major facilitator superfamily.

The protein localises to the membrane. Its function is as follows. MFS efflux transporter; part of the gene cluster that mediates the biosynthesis of wortmanamides A and B, reduced long-chain polyketides amidated with a specific omega-amino acid, 5-aminopentanoic acid (5PA). This Talaromyces wortmannii (Penicillium wortmannii) protein is MFS-type transporter TwmF.